The following is a 92-amino-acid chain: Kappa-scoloptoxin(15)-Ssd2a (92 aa).

The signal sequence occupies residues 1–20; the sequence is MKMVYLGLFLIITSCVISSG.

In terms of processing, contains 3 disulfide bonds. Expressed by the venom gland.

Its subcellular location is the secreted. Its function is as follows. Inhibits voltage-gated potassium channels (Kv) (IC(50)=about 10 nM), when tested on DRG neurons. The chain is Kappa-scoloptoxin(15)-Ssd2a from Scolopendra dehaani (Thai centipede).